A 121-amino-acid chain; its full sequence is IDYRKCQASQILKEHGMDKVIPLPELVCTMFHISGLSTQAEVNNHSNKEYGIFQISNDGWCAEKQEDVANSVCGILCSKFLDDDITDDIECAKKILQLPEGLGYWKAHETFCLEDLDQWRC.

The 121-residue stretch at 1–121 (IDYRKCQASQ…CLEDLDQWRC (121 aa)) folds into the C-type lysozyme domain. 4 cysteine pairs are disulfide-bonded: cysteine 6/cysteine 121, cysteine 28/cysteine 112, cysteine 61/cysteine 77, and cysteine 73/cysteine 91. Asparagine 44 carries an N-linked (GlcNAc...) asparagine glycan. Residues lysine 79, aspartate 82, aspartate 84, aspartate 87, and aspartate 88 each coordinate Ca(2+).

This sequence belongs to the glycosyl hydrolase 22 family. Lactose synthase (LS) is a heterodimer of a catalytic component, beta1,4-galactosyltransferase (beta4Gal-T1) and a regulatory component, alpha-lactalbumin (LA). In terms of tissue distribution, mammary gland specific. Secreted in milk.

Its subcellular location is the secreted. Functionally, regulatory subunit of lactose synthase, changes the substrate specificity of galactosyltransferase in the mammary gland making glucose a good acceptor substrate for this enzyme. This enables LS to synthesize lactose, the major carbohydrate component of milk. In other tissues, galactosyltransferase transfers galactose onto the N-acetylglucosamine of the oligosaccharide chains in glycoproteins. The chain is Alpha-lactalbumin (LALBA) from Notamacropus rufogriseus (Red-necked wallaby).